The sequence spans 199 residues: N-(5'-phosphoribosyl)anthranilate isomerase (199 aa).

Belongs to the TrpF family.

It catalyses the reaction N-(5-phospho-beta-D-ribosyl)anthranilate = 1-(2-carboxyphenylamino)-1-deoxy-D-ribulose 5-phosphate. It functions in the pathway amino-acid biosynthesis; L-tryptophan biosynthesis; L-tryptophan from chorismate: step 3/5. The protein is N-(5'-phosphoribosyl)anthranilate isomerase of Streptococcus pneumoniae (strain Taiwan19F-14).